Reading from the N-terminus, the 485-residue chain is Sodium-coupled neutral amino acid symporter 1 (485 aa).

At 1 to 74 the chain is on the cytoplasmic side; the sequence is MMHFKSGLEL…EYIPGTTSLG (74 aa). A Phosphoserine modification is found at Ser6. Thr11 bears the Phosphothreonine mark. Phosphoserine occurs at positions 25, 28, 49, and 52. A Phosphothreonine modification is found at Thr54. The residue at position 56 (Ser56) is a Phosphoserine. A helical transmembrane segment spans residues 75-97; that stretch reads MSVFNLSNAIMGSGILGLAFALA. Topologically, residues 98–112 are extracellular; it reads NTGILLFLILLTSVT. Residues 113–133 traverse the membrane as a helical segment; it reads LLSIYSINLLLICSKETGCMV. Residues 134–148 lie on the Cytoplasmic side of the membrane; sequence YEKLGEQVFGTTGKL. Residues 149–169 traverse the membrane as a helical segment; it reads VIFGATSLQNTGAMLSYLFIV. The Extracellular portion of the chain corresponds to 170 to 188; the sequence is KNELPSAIKSLMGEEDAFS. Residues 189–211 traverse the membrane as a helical segment; it reads AWYVDGRVLVVMVTFGIILPLCL. Residues 212-216 lie on the Cytoplasmic side of the membrane; it reads LKNLG. A helical transmembrane segment spans residues 217 to 237; that stretch reads YLGYTSGFSLSCMMFFLIVVI. At 238-273 the chain is on the extracellular side; the sequence is YKKFQTPCMSVEQNSTVSANVTDACTPKYVTFNSKT. Cysteines 245 and 262 form a disulfide. Residues Asn251 and Asn257 are each glycosylated (N-linked (GlcNAc...) asparagine). Residues 274-294 traverse the membrane as a helical segment; that stretch reads VYALPTIAFAFVCHPSVLPIY. At 295 to 310 the chain is on the cytoplasmic side; the sequence is SELKDRSQKKMQMVSN. Residues 311–331 traverse the membrane as a helical segment; that stretch reads ISFFAMFVMYFLTAIFGYLTF. Residues 332-348 are Extracellular-facing; the sequence is YEKVQSDLLHKYQSTGD. Residues 349 to 369 traverse the membrane as a helical segment; it reads ILILTVRLAVIVAVILTVPVL. Residues 370 to 391 lie on the Cytoplasmic side of the membrane; it reads FFTVRSSLFELAKKTKFHLCRH. The helical transmembrane segment at 392–412 threads the bilayer; the sequence is VLVTIILLIIINLLVIFIPSM. The Extracellular portion of the chain corresponds to 413 to 414; sequence KD. A helical transmembrane segment spans residues 415 to 435; it reads IFGVVGVTSANMLIFILPSSL. At 436 to 450 the chain is on the cytoplasmic side; it reads YLKITNQDGDKGTQR. A helical transmembrane segment spans residues 451–471; the sequence is IWAALFLGLGVLFSLISIPLV. Topologically, residues 472–485 are extracellular; sequence IYDWACSSGTDEGH.

This sequence belongs to the amino acid/polyamine transporter 2 family. In terms of processing, N-glycosylation plays an important role in the L-glutamine transport. In terms of tissue distribution, specifically expressed in brain and retina (at protein level). Also detected in spleen, small intestine and lung.

It is found in the cell membrane. The catalysed reaction is L-glutamine(in) + Na(+)(in) = L-glutamine(out) + Na(+)(out). The enzyme catalyses L-alanine(in) + Na(+)(in) = L-alanine(out) + Na(+)(out). It catalyses the reaction L-histidine(in) + Na(+)(in) = L-histidine(out) + Na(+)(out). It carries out the reaction L-asparagine(in) + Na(+)(in) = L-asparagine(out) + Na(+)(out). The catalysed reaction is L-serine(in) + Na(+)(in) = L-serine(out) + Na(+)(out). The enzyme catalyses L-cysteine(in) + Na(+)(in) = L-cysteine(out) + Na(+)(out). It catalyses the reaction L-methionine(in) + Na(+)(in) = L-methionine(out) + Na(+)(out). It carries out the reaction glycine(in) + Na(+)(in) = glycine(out) + Na(+)(out). The catalysed reaction is L-threonine(in) + Na(+)(in) = L-threonine(out) + Na(+)(out). The enzyme catalyses L-proline(in) + Na(+)(in) = L-proline(out) + Na(+)(out). Inhibited by alpha-(methylamino)isobutyric acid (MeAIB). Inhibited by lithium, potassium, choline ions, N-methylglucamine. The pH dependence has an allosteric effect on the transport. Functionally, symporter that cotransports short-chain neutral amino acids and sodium ions from the extraccellular to the intracellular side of the cell membrane. The transport is elctrogenic, pH dependent and driven by the Na(+) electrochemical gradient. Participates in the astroglia-derived glutamine transport into GABAergic interneurons for neurotransmitter GABA de novo synthesis. May also contributes to amino acid transport in placental trophoblast. Regulates synaptic plasticity. The polypeptide is Sodium-coupled neutral amino acid symporter 1 (Mus musculus (Mouse)).